The chain runs to 96 residues: Transmembrane protein PMIS2 (96 aa).

A run of 2 helical transmembrane segments spans residues 31 to 51 (VMLA…AIYF) and 76 to 96 (WFNM…VLVL).

This sequence belongs to the CD225/Dispanin family. In terms of tissue distribution, specifically expressed in testis.

The protein localises to the membrane. Functionally, may play a role in spermatozoa mobility. This is Transmembrane protein PMIS2 from Mus musculus (Mouse).